The following is a 256-amino-acid chain: Diacetyl reductase [(S)-acetoin forming] (256 aa).

NAD(+) is bound by residues 6-33 and D59; that span reads LVTG…AIAD. S139 serves as a coordination point for substrate. The active-site Proton acceptor is the Y152. K156 contacts NAD(+).

It belongs to the short-chain dehydrogenases/reductases (SDR) family. Homotetramer.

The enzyme catalyses (S)-acetoin + NAD(+) = diacetyl + NADH + H(+). Functionally, catalyzes the reversible reduction of (S)-acetoin to 2,3-butanediol in the presence of NADH. The protein is Diacetyl reductase [(S)-acetoin forming] (budC) of Klebsiella pneumoniae.